An 80-amino-acid chain; its full sequence is Cytochrome c oxidase subunit 7B, mitochondrial (80 aa).

Residues 1–24 (MLPLAKNALSRLQVRSIQQVVARQ) constitute a mitochondrion transit peptide. The Mitochondrial matrix portion of the chain corresponds to 25–32 (SHQKKTPT). The helical transmembrane segment at 33–59 (FHDKYGNAVLAGGSIFCISAWTYTATQ) threads the bilayer. The Mitochondrial intermembrane segment spans residues 60–80 (IGIEWNLSPVGRVTPKEWRDQ).

Belongs to the cytochrome c oxidase VIIb family. In terms of assembly, component of the cytochrome c oxidase (complex IV, CIV), a multisubunit enzyme composed of 14 subunits. The complex is composed of a catalytic core of 3 subunits MT-CO1, MT-CO2 and MT-CO3, encoded in the mitochondrial DNA, and 11 supernumerary subunits COX4I, COX5A, COX5B, COX6A, COX6B, COX6C, COX7A, COX7B, COX7C, COX8 and NDUFA4, which are encoded in the nuclear genome. The complex exists as a monomer or a dimer and forms supercomplexes (SCs) in the inner mitochondrial membrane with NADH-ubiquinone oxidoreductase (complex I, CI) and ubiquinol-cytochrome c oxidoreductase (cytochrome b-c1 complex, complex III, CIII), resulting in different assemblies (supercomplex SCI(1)III(2)IV(1) and megacomplex MCI(2)III(2)IV(2)).

It localises to the mitochondrion inner membrane. Its pathway is energy metabolism; oxidative phosphorylation. Its function is as follows. Component of the cytochrome c oxidase, the last enzyme in the mitochondrial electron transport chain which drives oxidative phosphorylation. The respiratory chain contains 3 multisubunit complexes succinate dehydrogenase (complex II, CII), ubiquinol-cytochrome c oxidoreductase (cytochrome b-c1 complex, complex III, CIII) and cytochrome c oxidase (complex IV, CIV), that cooperate to transfer electrons derived from NADH and succinate to molecular oxygen, creating an electrochemical gradient over the inner membrane that drives transmembrane transport and the ATP synthase. Cytochrome c oxidase is the component of the respiratory chain that catalyzes the reduction of oxygen to water. Electrons originating from reduced cytochrome c in the intermembrane space (IMS) are transferred via the dinuclear copper A center (CU(A)) of subunit 2 and heme A of subunit 1 to the active site in subunit 1, a binuclear center (BNC) formed by heme A3 and copper B (CU(B)). The BNC reduces molecular oxygen to 2 water molecules using 4 electrons from cytochrome c in the IMS and 4 protons from the mitochondrial matrix. Plays a role in proper central nervous system (CNS) development in vertebrates. This Rattus norvegicus (Rat) protein is Cytochrome c oxidase subunit 7B, mitochondrial (Cox7b).